The following is a 138-amino-acid chain: MLSPKRTKFRRHHRGRMKGISSRGNFIAFGKFALQALEPSWITSRQIEAGRRAMTRYARRGGKIWIRIFPDKPVTMRAAETRMGSGKGSPEFWVAVVKPGRILYEMSGVSESIAKSAMRIAAFKMPIKTQFLVKKDKV.

Belongs to the universal ribosomal protein uL16 family. As to quaternary structure, part of the 50S ribosomal subunit.

Its subcellular location is the plastid. It is found in the chloroplast. The sequence is that of Large ribosomal subunit protein uL16c from Chaetosphaeridium globosum (Charophycean green alga).